The chain runs to 185 residues: Large ribosomal subunit protein uL5 (185 aa).

The protein belongs to the universal ribosomal protein uL5 family. As to quaternary structure, part of the 50S ribosomal subunit; part of the 5S rRNA/L5/L18/L25 subcomplex. Contacts the 5S rRNA and the P site tRNA. Forms a bridge to the 30S subunit in the 70S ribosome.

In terms of biological role, this is one of the proteins that bind and probably mediate the attachment of the 5S RNA into the large ribosomal subunit, where it forms part of the central protuberance. In the 70S ribosome it contacts protein S13 of the 30S subunit (bridge B1b), connecting the 2 subunits; this bridge is implicated in subunit movement. Contacts the P site tRNA; the 5S rRNA and some of its associated proteins might help stabilize positioning of ribosome-bound tRNAs. The protein is Large ribosomal subunit protein uL5 of Parabacteroides distasonis (strain ATCC 8503 / DSM 20701 / CIP 104284 / JCM 5825 / NCTC 11152).